The sequence spans 109 residues: Flagellar hook-basal body complex protein FliE (109 aa).

The protein belongs to the FliE family.

The protein resides in the bacterial flagellum basal body. The protein is Flagellar hook-basal body complex protein FliE of Pseudomonas syringae pv. tomato (strain ATCC BAA-871 / DC3000).